The primary structure comprises 1167 residues: PH and Rap-GAP domain-containing protein DDB_G0271806 (1167 aa).

PH domains follow at residues 35–140 and 165–257; these read NCVK…SSSL and HVYL…SRIP. The interval 95–160 is disordered; it reads GIDNNNCTNS…TNANTNNGLS (66 aa). Low complexity predominate over residues 98-155; it reads NNNCTNSNSNNNNNNSDLIHLSAPSLSSSTSSTISPISSSSSLTTTTTTTTTTTNANT. Disordered stretches follow at residues 335–361, 376–400, and 645–734; these read SGGG…GGSL, WRFS…STQV, and YSRS…LEPE. Residues 340–351 show a composition bias toward low complexity; it reads NNSSPSSLQSQQ. A compositionally biased stretch (polar residues) spans 648–676; the sequence is SEPNLQSCLSSSPSTRETMVPSSPSSHQL. Over residues 687-732 the composition is skewed to low complexity; it reads EQQLSSSSSSSSQQLQLQLQQQEQEQLLQEQPEAEQSQPEPQPQLE. The 213-residue stretch at 950–1162 folds into the Rap-GAP domain; the sequence is LLSFEERQTT…RTRESLLNYY (213 aa).

This chain is PH and Rap-GAP domain-containing protein DDB_G0271806, found in Dictyostelium discoideum (Social amoeba).